A 257-amino-acid polypeptide reads, in one-letter code: MLALYGTEVASRLLLGTARYPSPAILAEAVRQSATEIVTVSLRRETAGGRNGGAFFEMIRTLGVRILPNTAGCHGVSEAVLTAKMAREVFQTNWIKLEVIGNHDTLQPDVFGLVEAARILASEGFEVFPYTTDDLVVAERLLDAGCKVLMPWCAPIGSAAGPLNLSALRAMRAHFPDVPLIVDAGIGRPSHATTVMELGFDAVLLNTAVAGARDPAAMAGAFAKAIDAGRLAFTAGMLEPRDMAVPSTPVIGKAVFA.

Residue Lys96 is the Schiff-base intermediate with DXP of the active site. Residues Gly157, Ala184–Gly185, and Asn206–Thr207 each bind 1-deoxy-D-xylulose 5-phosphate.

The protein belongs to the ThiG family. As to quaternary structure, homotetramer. Forms heterodimers with either ThiH or ThiS.

The protein resides in the cytoplasm. It catalyses the reaction [ThiS sulfur-carrier protein]-C-terminal-Gly-aminoethanethioate + 2-iminoacetate + 1-deoxy-D-xylulose 5-phosphate = [ThiS sulfur-carrier protein]-C-terminal Gly-Gly + 2-[(2R,5Z)-2-carboxy-4-methylthiazol-5(2H)-ylidene]ethyl phosphate + 2 H2O + H(+). Its pathway is cofactor biosynthesis; thiamine diphosphate biosynthesis. Its function is as follows. Catalyzes the rearrangement of 1-deoxy-D-xylulose 5-phosphate (DXP) to produce the thiazole phosphate moiety of thiamine. Sulfur is provided by the thiocarboxylate moiety of the carrier protein ThiS. In vitro, sulfur can be provided by H(2)S. This Rhizobium rhizogenes (strain K84 / ATCC BAA-868) (Agrobacterium radiobacter) protein is Thiazole synthase.